A 397-amino-acid polypeptide reads, in one-letter code: MNFNKKTIEDVQVKGKKVLVRCDFNVPLKDGVITDENRLNGAMPTIKYLVDNGAQVILCSHMGKPKGEAKPEFSLAPVAKRLSEMLGKEVVFAADDNVVGENAKKAVAEMKDGDVVLLQNTRYRKEETKNGEELSKELASLAEMFVNDAFGTAHRAHCSTVGVTEYLKPAVCGYLIQKELKFLGDAVETPERPFVAILGGAKVSDKINVINNLLEKVDTLIIGGGMAYTFLKAQGYTVGSSLVEEDKVEYAKEMLAKAEEKGVKLLLPVDHRVAKEFKDVEAVVTEDQNIAEGFMGLDIGPKTEAIYAEAIKDAKTVIWNGPMGVFEFENFNKGTIAVAKAMAEADATTIIGGGDSAAAVNILGFGDKMSHISTGGGASLEFLEGKVLPGIAALNDK.

Substrate contacts are provided by residues 23-25 (DFN), R38, 61-64 (HMGK), R122, and R155. Residues K206, G296, E327, and 353-356 (GGDS) each bind ATP.

Belongs to the phosphoglycerate kinase family. As to quaternary structure, monomer.

It localises to the cytoplasm. It carries out the reaction (2R)-3-phosphoglycerate + ATP = (2R)-3-phospho-glyceroyl phosphate + ADP. It participates in carbohydrate degradation; glycolysis; pyruvate from D-glyceraldehyde 3-phosphate: step 2/5. The protein is Phosphoglycerate kinase of Clostridium perfringens (strain SM101 / Type A).